Reading from the N-terminus, the 316-residue chain is Lys-63-specific deubiquitinase BRCC36 (316 aa).

At alanine 2 the chain carries N-acetylalanine. The MPN domain occupies 12–179 (VHLESDAFLV…YTCFQSIQAQ (168 aa)). Zn(2+) contacts are provided by histidine 122, histidine 124, and aspartate 135. Positions 122–135 (HSHPHITVWPSHVD) match the JAMM motif motif. Serine 258 is subject to Phosphoserine.

The protein belongs to the peptidase M67A family. BRCC36 subfamily. In terms of assembly, component of the ARISC complex, at least composed of UIMC1/RAP80, ABRAXAS1, BRCC3/BRCC36, BABAM2 and BABAM1/NBA1. Component of the BRCA1-A complex, at least composed of BRCA1, BARD1, UIMC1/RAP80, ABRAXAS1, BRCC3/BRCC36, BABAM2 and BABAM1/NBA1. In the BRCA1-A complex, interacts directly with ABRAXAS1 and BABAM2. Component of the BRISC complex, at least composed of ABRAXAS2, BRCC3/BRCC36, BABAM2 and BABAM1/NBA1. Identified in a complex with SHMT2 and the other subunits of the BRISC complex. In the BRISC complex, interacts directly with ABRAXAS2. Identified in a complex with ABRAXAS2 and NUMA1. The BRISC complex interacts with the CSN complex. Component of the BRCA1/BRCA2 containing complex (BRCC), which also contains BRCA1, BRCA2, BARD1, BABAM2 and RAD51. BRCC is a ubiquitin E3 ligase complex that enhances cellular survival following DNA damage. Interacts with BRCA1. Binds polyubiquitin. Interacts with PWWP2B. Interacts with HDAC1; this interaction is enhanced in the presence of PWWP2B. Zn(2+) serves as cofactor.

It is found in the nucleus. It localises to the cytoplasm. The protein resides in the cytoskeleton. The protein localises to the spindle pole. In terms of biological role, metalloprotease that specifically cleaves 'Lys-63'-linked polyubiquitin chains. Does not have activity toward 'Lys-48'-linked polyubiquitin chains. Component of the BRCA1-A complex, a complex that specifically recognizes 'Lys-63'-linked ubiquitinated histones H2A and H2AX at DNA lesions sites, leading to target the BRCA1-BARD1 heterodimer to sites of DNA damage at double-strand breaks (DSBs). In the BRCA1-A complex, it specifically removes 'Lys-63'-linked ubiquitin on histones H2A and H2AX, antagonizing the RNF8-dependent ubiquitination at double-strand breaks (DSBs). Catalytic subunit of the BRISC complex, a multiprotein complex that specifically cleaves 'Lys-63'-linked ubiquitin in various substrates. Mediates the specific 'Lys-63'-specific deubiquitination associated with the COP9 signalosome complex (CSN), via the interaction of the BRISC complex with the CSN complex. The BRISC complex is required for normal mitotic spindle assembly and microtubule attachment to kinetochores via its role in deubiquitinating NUMA1. Plays a role in interferon signaling via its role in the deubiquitination of the interferon receptor IFNAR1; deubiquitination increases IFNAR1 activity by enhancing its stability and cell surface expression. Acts as a regulator of the NLRP3 inflammasome by mediating deubiquitination of NLRP3, leading to NLRP3 inflammasome assembly. Down-regulates the response to bacterial lipopolysaccharide (LPS) via its role in IFNAR1 deubiquitination. Deubiquitinates HDAC1 and PWWP2B leading to their stabilization. The polypeptide is Lys-63-specific deubiquitinase BRCC36 (BRCC3) (Bos taurus (Bovine)).